Consider the following 255-residue polypeptide: MSQEFLARILEQKAREVEQMKLEQIQPLRQTYRLAEFLKNHQDRLQVIAEVKKASPSLGDINLDVDIVQQAQTYEENGAVMISVLTDEVFFKGHLDYLREISSQVEIPTLNKDFIIDEKQIIRARNAGATVILLIVAALSEERLKELYDYATELGLEVLVETHNLAELEVAHRLGAEIIGVNNRNLTTFEVDLQTSVDLAPYFEEGRYYISESAIFTGQDAERLAPYFNGILVGTALMQAENVAQRIKELQIDKG.

Belongs to the TrpC family.

The catalysed reaction is 1-(2-carboxyphenylamino)-1-deoxy-D-ribulose 5-phosphate + H(+) = (1S,2R)-1-C-(indol-3-yl)glycerol 3-phosphate + CO2 + H2O. It functions in the pathway amino-acid biosynthesis; L-tryptophan biosynthesis; L-tryptophan from chorismate: step 4/5. The protein is Indole-3-glycerol phosphate synthase of Streptococcus pneumoniae serotype 19F (strain G54).